The chain runs to 231 residues: Aquaporin Z (231 aa).

The next 2 membrane-spanning stretches (helical) occupy residues 11 to 31 and 36 to 56; these read FLGT…AAAF and IGLL…AFAI. An NPA 1 motif is present at residues 65–67; sequence NPA. 3 consecutive transmembrane segments (helical) span residues 84–104, 132–152, and 161–181; these read LPYI…LYLI, MISV…VILG, and GFAP…SIPI. The NPA 2 signature appears at 187–189; sequence NPA. Residues 203–223 form a helical membrane-spanning segment; that stretch reads VSQLWLFWAAPIIGAILAGVI.

Belongs to the MIP/aquaporin (TC 1.A.8) family. In terms of assembly, homotetramer.

The protein localises to the cell inner membrane. It catalyses the reaction H2O(in) = H2O(out). Functionally, channel that permits osmotically driven movement of water in both directions. It is involved in the osmoregulation and in the maintenance of cell turgor during volume expansion in rapidly growing cells. It mediates rapid entry or exit of water in response to abrupt changes in osmolarity. The polypeptide is Aquaporin Z (Shewanella oneidensis (strain ATCC 700550 / JCM 31522 / CIP 106686 / LMG 19005 / NCIMB 14063 / MR-1)).